The chain runs to 35 residues: Tamulustoxin (35 aa).

Intrachain disulfides connect Cys2–Cys22, Cys7–Cys31, and Cys11–Cys33.

As to expression, expressed by the venom gland.

It is found in the secreted. Functionally, blocks Kv1.6/KCNA6 potassium channels. The sequence is that of Tamulustoxin from Hottentotta tamulus (Eastern Indian scorpion).